The chain runs to 127 residues: Mediator of RNA polymerase II transcription subunit 31 (127 aa).

It belongs to the Mediator complex subunit 31 family. Component of the Mediator complex, which is composed of at least 21 subunits that form three structurally distinct submodules. The Mediator head module contains MED6, MED8, MED11, SRB4/MED17, SRB5/MED18, ROX3/MED19, SRB2/MED20 and SRB6/MED22, the middle module contains MED1, MED4, NUT1/MED5, MED7, CSE2/MED9, NUT2/MED10, SRB7/MED21 and SOH1/MED31, and the tail module contains MED2, PGD1/MED3, RGR1/MED14, GAL11/MED15 and SIN4/MED16. The head and the middle modules interact directly with RNA polymerase II, whereas the elongated tail module interacts with gene-specific regulatory proteins.

It is found in the nucleus. Functionally, component of the Mediator complex, a coactivator involved in the regulated transcription of nearly all RNA polymerase II-dependent genes. Mediator functions as a bridge to convey information from gene-specific regulatory proteins to the basal RNA polymerase II transcription machinery. The Mediator complex, having a compact conformation in its free form, is recruited to promoters by direct interactions with regulatory proteins and serves for the assembly of a functional preinitiation complex with RNA polymerase II and the general transcription factors. The Mediator complex unfolds to an extended conformation and partially surrounds RNA polymerase II, specifically interacting with the unphosphorylated form of the C-terminal domain (CTD) of RNA polymerase II. The Mediator complex dissociates from the RNA polymerase II holoenzyme and stays at the promoter when transcriptional elongation begins. The sequence is that of Mediator of RNA polymerase II transcription subunit 31 (SOH1) from Saccharomyces cerevisiae (strain ATCC 204508 / S288c) (Baker's yeast).